Reading from the N-terminus, the 764-residue chain is Aconitate hydratase (764 aa).

75–77 (DSH) contributes to the substrate binding site. [4Fe-4S] cluster-binding residues include Cys-307, Cys-372, and Cys-375. Substrate-binding positions include Arg-405, Arg-410, Arg-568, and 648 to 649 (SR).

Belongs to the aconitase/IPM isomerase family. [4Fe-4S] cluster is required as a cofactor.

It is found in the cytoplasm. It catalyses the reaction citrate = D-threo-isocitrate. Its pathway is carbohydrate metabolism; glyoxylate and dicarboxylate metabolism. In terms of biological role, catalyzes the isomerization of citrate to isocitrate via cis-aconitate. This chain is Aconitate hydratase (ACO), found in Cucumis melo var. conomon (Oriental pickling melon).